A 540-amino-acid polypeptide reads, in one-letter code: Ribonuclease Y (540 aa).

Residues 4–24 (TILVPVAVAIVSVLVGGCAGY) form a helical membrane-spanning segment. The 64-residue stretch at 230–293 (TVSVVNLPND…EIAKRALERL (64 aa)) folds into the KH domain. The HD domain maps to 356–449 (VLSHSIEVGK…VVAADTISSA (94 aa)).

Belongs to the RNase Y family.

It is found in the cell membrane. Functionally, endoribonuclease that initiates mRNA decay. The polypeptide is Ribonuclease Y (Lactobacillus gasseri (strain ATCC 33323 / DSM 20243 / BCRC 14619 / CIP 102991 / JCM 1131 / KCTC 3163 / NCIMB 11718 / NCTC 13722 / AM63)).